Consider the following 662-residue polypeptide: 72 kDa type IV collagenase (662 aa).

The first 29 residues, 1–29 (MEALGARGALAGFLRALCVLGCLLGRATA), serve as a signal peptide directing secretion. Positions 30–109 (PPSPVIKFPG…PRCGNPDVAN (80 aa)) are cleaved as a propeptide — activation peptide. Positions 100-107 (PRCGNPDV) match the Cysteine switch motif. Residue Cys102 coordinates Zn(2+). The interval 110-221 (YNFFPRKPKW…LWTLGEGQVV (112 aa)) is collagenase-like 1. The Ca(2+) site is built by Asp134 and Asp168. Positions 178 and 180 each coordinate Zn(2+). Positions 185 and 186 each coordinate Ca(2+). His193 is a binding site for Zn(2+). 3 residues coordinate Ca(2+): Gly200, Gly202, and Asp204. His206 is a Zn(2+) binding site. Residues Asp208, Asp209, and Glu211 each contribute to the Ca(2+) site. Residues 222–396 (RVKYGNADGE…WGFCPDQGYS (175 aa)) are collagen-binding. Fibronectin type-II domains follow at residues 228-276 (ADGE…FCPH), 286-334 (ADGQ…FCPE), and 344-392 (SEGA…FCPD). 6 disulfide bridges follow: Cys233/Cys259, Cys247/Cys274, Cys291/Cys317, Cys305/Cys332, Cys349/Cys375, and Cys363/Cys390. Positions 397-467 (LFLVAAHEFG…GPTPTLGPVT (71 aa)) are collagenase-like 2. Zn(2+) is bound at residue His403. The active site involves Glu404. Residues His407 and His413 each coordinate Zn(2+). A required for inhibitor TIMP2 binding region spans residues 414–662 (SQDPGALMAP…GSIKTDWLGC (249 aa)). Cys471 and Cys662 are oxidised to a cystine. Hemopexin repeat units follow at residues 474 to 518 (DIVF…WPEL), 519 to 565 (PEKI…GLPP), 567 to 615 (VQRV…WNAI), and 616 to 662 (PDHL…WLGC). Residues Asp478, Asp523, and Asp571 each coordinate Ca(2+). A glycan (N-linked (GlcNAc...) asparagine) is linked at Asn575. A Ca(2+)-binding site is contributed by Asp620. Asn644 carries an N-linked (GlcNAc...) asparagine glycan.

This sequence belongs to the peptidase M10A family. In terms of assembly, interacts (via the C-terminal hemopexin-like domains-containing region) with the integrin alpha-V/beta-3; the interaction promotes vascular invasion in angiogenic vessels and melamoma cells. Interacts (via the C-terminal PEX domain) with TIMP2 (via the C-terminal); the interaction inhibits the degradation activity. Interacts with GSK3B. Requires Ca(2+) as cofactor. Zn(2+) serves as cofactor. Post-translationally, phosphorylation on multiple sites modulates enzymatic activity. Phosphorylated by PKC in vitro. In terms of processing, the propeptide is processed by MMP14 (MT-MMP1) and MMP16 (MT-MMP3). Autocatalytic cleavage in the C-terminal produces the anti-angiogenic peptide, PEX. This processing appears to be facilitated by binding integrinv/beta3.

The protein localises to the secreted. The protein resides in the extracellular space. It localises to the extracellular matrix. It is found in the membrane. Its subcellular location is the nucleus. It carries out the reaction Cleavage of gelatin type I and collagen types IV, V, VII, X. Cleaves the collagen-like sequence Pro-Gln-Gly-|-Ile-Ala-Gly-Gln.. Functionally, ubiquitinous metalloproteinase that is involved in diverse functions such as remodeling of the vasculature, angiogenesis, tissue repair, tumor invasion, inflammation, and atherosclerotic plaque rupture. As well as degrading extracellular matrix proteins, can also act on several nonmatrix proteins such as big endothelial 1 and beta-type CGRP promoting vasoconstriction. Also cleaves KISS at a Gly-|-Leu bond. Appears to have a role in myocardial cell death pathways. Contributes to myocardial oxidative stress by regulating the activity of GSK3beta. Cleaves GSK3beta in vitro. Involved in the formation of the fibrovascular tissues. PEX, the C-terminal non-catalytic fragment of MMP2, possesses anti-angiogenic and anti-tumor properties and inhibits cell migration and cell adhesion to FGF2 and vitronectin. Ligand for integrin alpha-v/beta-3 on the surface of blood vessels. The sequence is that of 72 kDa type IV collagenase (MMP2) from Oryctolagus cuniculus (Rabbit).